Consider the following 401-residue polypeptide: Acetate kinase (401 aa).

Asn9 contributes to the Mg(2+) binding site. An ATP-binding site is contributed by Lys16. Residue Arg88 coordinates substrate. The active-site Proton donor/acceptor is Asp147. Residues 207–211 (HLGNG), 282–284 (DCR), and 333–337 (GIGEN) each bind ATP. Glu388 is a Mg(2+) binding site.

It belongs to the acetokinase family. Homodimer. The cofactor is Mg(2+). Requires Mn(2+) as cofactor.

Its subcellular location is the cytoplasm. The catalysed reaction is acetate + ATP = acetyl phosphate + ADP. It participates in metabolic intermediate biosynthesis; acetyl-CoA biosynthesis; acetyl-CoA from acetate: step 1/2. Its function is as follows. Catalyzes the formation of acetyl phosphate from acetate and ATP. Can also catalyze the reverse reaction. The protein is Acetate kinase of Haemophilus influenzae (strain PittGG).